The primary structure comprises 21 residues: Thioredoxin (21 aa).

An N6-acetyllysine modification is found at Lys3. Lys8 is subject to N6-succinyllysine.

The protein belongs to the thioredoxin family. In terms of assembly, homodimer; disulfide-linked. Interacts with TXNIP through the redox-active site. Interacts with MAP3K5 and CASP3. Interacts with APEX1; the interaction stimulates the FOS/JUN AP-1 DNA-binding activity in a redox-dependent manner.

The protein localises to the nucleus. Its subcellular location is the cytoplasm. It is found in the secreted. In terms of biological role, participates in various redox reactions through the reversible oxidation of its active center dithiol to a disulfide and catalyzes dithiol-disulfide exchange reactions. Plays a role in the reversible S-nitrosylation of cysteine residues in target proteins, and thereby contributes to the response to intracellular nitric oxide. Nitrosylates the active site Cys of CASP3 in response to nitric oxide (NO), and thereby inhibits caspase-3 activity. Induces the FOS/JUN AP-1 DNA binding activity in ionizing radiation (IR) cells through its oxidation/reduction status and stimulates AP-1 transcriptional activity. In Canis lupus familiaris (Dog), this protein is Thioredoxin (TXN).